The sequence spans 746 residues: Lysine-specific histone demethylase 1 homolog 2 (746 aa).

Residues 1–26 (MNSPASDETAPRRNRRKVSRKNYDEN) form a disordered region. The 102-residue stretch at 51–152 (EKETETEALI…FGVSPLFAPY (102 aa)) folds into the SWIRM domain. 4 residues coordinate FAD: glutamate 189, arginine 191, arginine 197, and glutamate 569.

The protein belongs to the flavin monoamine oxidase family. FAD is required as a cofactor. Expressed in the shoot and root apical regions of young seedlings. Expressed in inflorescences.

Probable histone demethylase that reduces the levels of histone H3 'Lys-4' methylation in chromatin of the floral repressor FLOWERING LOCUS C (FLC) and the sporophytically silenced floral repressor FWA. Seems to act in partial redundancy with FLOWERING LOCUS D (FLD) to repress FLC expression. Required for cytosine methylation of FWA. Controls primary seed dormancy by regulating DOG1 and abscisic acid signaling-related genes. The chain is Lysine-specific histone demethylase 1 homolog 2 from Arabidopsis thaliana (Mouse-ear cress).